A 150-amino-acid chain; its full sequence is Ribonuclease H (150 aa).

In terms of domain architecture, RNase H type-1 spans 7-148; sequence ERPRVEIWTD…VDQLATRGRE (142 aa). The Mg(2+) site is built by D16, E54, D76, and D140.

The protein belongs to the RNase H family. In terms of assembly, monomer. It depends on Mg(2+) as a cofactor.

The protein resides in the cytoplasm. It carries out the reaction Endonucleolytic cleavage to 5'-phosphomonoester.. In terms of biological role, endonuclease that specifically degrades the RNA of RNA-DNA hybrids. The polypeptide is Ribonuclease H (Gluconobacter oxydans (strain 621H) (Gluconobacter suboxydans)).